A 329-amino-acid chain; its full sequence is UDP-N-acetylenolpyruvoylglucosamine reductase (329 aa).

Residues 28 to 192 (RVGGPADLLC…ARVEVRLHPG (165 aa)) enclose the FAD-binding PCMH-type domain. Residue R172 is part of the active site. Catalysis depends on S221, which acts as the Proton donor. E291 is an active-site residue. Residues 307–329 (DGHAAAGGGPGAASGGVRPPEAT) are disordered. The span at 311–320 (AAGGGPGAAS) shows a compositional bias: gly residues.

This sequence belongs to the MurB family. FAD is required as a cofactor.

Its subcellular location is the cytoplasm. The catalysed reaction is UDP-N-acetyl-alpha-D-muramate + NADP(+) = UDP-N-acetyl-3-O-(1-carboxyvinyl)-alpha-D-glucosamine + NADPH + H(+). It functions in the pathway cell wall biogenesis; peptidoglycan biosynthesis. Cell wall formation. This is UDP-N-acetylenolpyruvoylglucosamine reductase from Anaeromyxobacter dehalogenans (strain 2CP-1 / ATCC BAA-258).